Reading from the N-terminus, the 91-residue chain is Large ribosomal subunit protein eL43 (91 aa).

The C4-type zinc finger occupies 39–60 (CPFCGKDAMRRGAVGIWNCSKC).

The protein belongs to the eukaryotic ribosomal protein eL43 family.

This is Large ribosomal subunit protein eL43 (rpl-37a) from Ostertagia ostertagi (Brown stomach worm).